The following is a 24-amino-acid chain: SHGKQETDEEFDARWVTYFNKSDI.

Belongs to the cytochrome c oxidase subunit 5A family. In terms of assembly, component of the cytochrome c oxidase (complex IV, CIV), a multisubunit enzyme composed of 14 subunits. The complex is composed of a catalytic core of 3 subunits MT-CO1, MT-CO2 and MT-CO3, encoded in the mitochondrial DNA, and 11 supernumerary subunits COX4I, COX5A, COX5B, COX6A, COX6B, COX6C, COX7A, COX7B, COX7C, COX8 and NDUFA4, which are encoded in the nuclear genome. The complex exists as a monomer or a dimer and forms supercomplexes (SCs) in the inner mitochondrial membrane with NADH-ubiquinone oxidoreductase (complex I, CI) and ubiquinol-cytochrome c oxidoreductase (cytochrome b-c1 complex, complex III, CIII), resulting in different assemblies (supercomplex SCI(1)III(2)IV(1) and megacomplex MCI(2)III(2)IV(2)).

It localises to the mitochondrion inner membrane. It participates in energy metabolism; oxidative phosphorylation. Component of the cytochrome c oxidase, the last enzyme in the mitochondrial electron transport chain which drives oxidative phosphorylation. The respiratory chain contains 3 multisubunit complexes succinate dehydrogenase (complex II, CII), ubiquinol-cytochrome c oxidoreductase (cytochrome b-c1 complex, complex III, CIII) and cytochrome c oxidase (complex IV, CIV), that cooperate to transfer electrons derived from NADH and succinate to molecular oxygen, creating an electrochemical gradient over the inner membrane that drives transmembrane transport and the ATP synthase. Cytochrome c oxidase is the component of the respiratory chain that catalyzes the reduction of oxygen to water. Electrons originating from reduced cytochrome c in the intermembrane space (IMS) are transferred via the dinuclear copper A center (CU(A)) of subunit 2 and heme A of subunit 1 to the active site in subunit 1, a binuclear center (BNC) formed by heme A3 and copper B (CU(B)). The BNC reduces molecular oxygen to 2 water molecules using 4 electrons from cytochrome c in the IMS and 4 protons from the mitochondrial matrix. The polypeptide is Cytochrome c oxidase subunit 5A-2, mitochondrial (Thunnus obesus (Bigeye tuna)).